We begin with the raw amino-acid sequence, 514 residues long: Membrane-bound lytic murein transglycosylase F (514 aa).

An N-terminal signal peptide occupies residues 1–30 (MKKLKINYLFIGILTLLLAAALWPSIPWFG). The tract at residues 31–269 (KTENHIAAIQ…RIEEKYLGHG (239 aa)) is non-LT domain. The segment at 270–514 (DDFDYVDTRS…LFTPQKKEEK (245 aa)) is LT domain. Glu314 is an active-site residue.

In the N-terminal section; belongs to the bacterial solute-binding protein 3 family. This sequence in the C-terminal section; belongs to the transglycosylase Slt family.

It localises to the cell outer membrane. The catalysed reaction is Exolytic cleavage of the (1-&gt;4)-beta-glycosidic linkage between N-acetylmuramic acid (MurNAc) and N-acetylglucosamine (GlcNAc) residues in peptidoglycan, from either the reducing or the non-reducing ends of the peptidoglycan chains, with concomitant formation of a 1,6-anhydrobond in the MurNAc residue.. In terms of biological role, murein-degrading enzyme that degrades murein glycan strands and insoluble, high-molecular weight murein sacculi, with the concomitant formation of a 1,6-anhydromuramoyl product. Lytic transglycosylases (LTs) play an integral role in the metabolism of the peptidoglycan (PG) sacculus. Their lytic action creates space within the PG sacculus to allow for its expansion as well as for the insertion of various structures such as secretion systems and flagella. This Salmonella paratyphi A (strain ATCC 9150 / SARB42) protein is Membrane-bound lytic murein transglycosylase F.